A 542-amino-acid chain; its full sequence is CTP synthase (542 aa).

The segment at 1–265 is amidoligase domain; the sequence is MARYVFITGG…DSEILSAFGI (265 aa). A CTP-binding site is contributed by serine 13. Serine 13 contacts UTP. Residue 14-19 participates in ATP binding; that stretch reads SLGKGI. An L-glutamine-binding site is contributed by tyrosine 54. Aspartate 71 lines the ATP pocket. Mg(2+) contacts are provided by aspartate 71 and glutamate 139. CTP-binding positions include 146 to 148, 186 to 191, and lysine 222; these read DIE and KTKPTQ. UTP contacts are provided by residues 186–191 and lysine 222; that span reads KTKPTQ. A Glutamine amidotransferase type-1 domain is found at 291–541; sequence TIAIVGKYTG…IAATVEQSRL (251 aa). Alanine 353 contributes to the L-glutamine binding site. Catalysis depends on cysteine 380, which acts as the Nucleophile; for glutamine hydrolysis. L-glutamine contacts are provided by residues 381 to 384, glutamate 404, and arginine 469; that span reads FGMQ. Catalysis depends on residues histidine 514 and glutamate 516.

Belongs to the CTP synthase family. Homotetramer.

It carries out the reaction UTP + L-glutamine + ATP + H2O = CTP + L-glutamate + ADP + phosphate + 2 H(+). It catalyses the reaction L-glutamine + H2O = L-glutamate + NH4(+). The catalysed reaction is UTP + NH4(+) + ATP = CTP + ADP + phosphate + 2 H(+). It functions in the pathway pyrimidine metabolism; CTP biosynthesis via de novo pathway; CTP from UDP: step 2/2. Its activity is regulated as follows. Allosterically activated by GTP, when glutamine is the substrate; GTP has no effect on the reaction when ammonia is the substrate. The allosteric effector GTP functions by stabilizing the protein conformation that binds the tetrahedral intermediate(s) formed during glutamine hydrolysis. Inhibited by the product CTP, via allosteric rather than competitive inhibition. Functionally, catalyzes the ATP-dependent amination of UTP to CTP with either L-glutamine or ammonia as the source of nitrogen. Regulates intracellular CTP levels through interactions with the four ribonucleotide triphosphates. This Bartonella bacilliformis (strain ATCC 35685 / KC583 / Herrer 020/F12,63) protein is CTP synthase.